The primary structure comprises 270 residues: Flavin-dependent thymidylate synthase (270 aa).

Residues 13–218 (GFVRLVDQMG…PLAWAAFEEH (206 aa)) form the ThyX domain. Residues S59, 82 to 84 (RHR), and E90 each bind FAD. DUMP-binding positions include 79–82 (QWFR), 90–94 (EISGR), and R157. The ThyX motif motif lies at 82 to 92 (RHRTASVNEIS). FAD contacts are provided by residues 173–175 (DLH) and H179. DUMP is bound at residue R184. R184 serves as the catalytic Involved in ionization of N3 of dUMP, leading to its activation.

The protein belongs to the thymidylate synthase ThyX family. In terms of assembly, homotetramer. It depends on FAD as a cofactor.

It catalyses the reaction dUMP + (6R)-5,10-methylene-5,6,7,8-tetrahydrofolate + NADPH + H(+) = dTMP + (6S)-5,6,7,8-tetrahydrofolate + NADP(+). Its pathway is pyrimidine metabolism; dTTP biosynthesis. Its function is as follows. Catalyzes the reductive methylation of 2'-deoxyuridine-5'-monophosphate (dUMP) to 2'-deoxythymidine-5'-monophosphate (dTMP) while utilizing 5,10-methylenetetrahydrofolate (mTHF) as the methyl donor, and NADPH and FADH(2) as the reductant. In Thermus thermophilus (strain ATCC 27634 / DSM 579 / HB8), this protein is Flavin-dependent thymidylate synthase.